The primary structure comprises 100 residues: uncharacterized protein (100 aa).

This is an uncharacterized protein from Enterobacteria phage T4 (Bacteriophage T4).